Reading from the N-terminus, the 503-residue chain is ATP synthase subunit alpha (503 aa).

169–176 (GDRQTGKT) is a binding site for ATP.

This sequence belongs to the ATPase alpha/beta chains family. As to quaternary structure, F-type ATPases have 2 components, CF(1) - the catalytic core - and CF(0) - the membrane proton channel. CF(1) has five subunits: alpha(3), beta(3), gamma(1), delta(1), epsilon(1). CF(0) has three main subunits: a(1), b(2) and c(9-12). The alpha and beta chains form an alternating ring which encloses part of the gamma chain. CF(1) is attached to CF(0) by a central stalk formed by the gamma and epsilon chains, while a peripheral stalk is formed by the delta and b chains.

The protein resides in the cell membrane. It catalyses the reaction ATP + H2O + 4 H(+)(in) = ADP + phosphate + 5 H(+)(out). Produces ATP from ADP in the presence of a proton gradient across the membrane. The alpha chain is a regulatory subunit. The protein is ATP synthase subunit alpha of Staphylococcus epidermidis (strain ATCC 35984 / DSM 28319 / BCRC 17069 / CCUG 31568 / BM 3577 / RP62A).